The primary structure comprises 235 residues: Lipoprotein-releasing system ATP-binding protein LolD (235 aa).

The 231-residue stretch at 5–235 folds into the ABC transporter domain; that stretch reads FALANIYKSF…SIDESGFNKI (231 aa). 40-47 serves as a coordination point for ATP; sequence GKSGSGKS.

It belongs to the ABC transporter superfamily. Lipoprotein translocase (TC 3.A.1.125) family. The complex is composed of two ATP-binding proteins (LolD) and two transmembrane proteins (LolC and LolE).

The protein resides in the cell inner membrane. In terms of biological role, part of the ABC transporter complex LolCDE involved in the translocation of mature outer membrane-directed lipoproteins, from the inner membrane to the periplasmic chaperone, LolA. Responsible for the formation of the LolA-lipoprotein complex in an ATP-dependent manner. The sequence is that of Lipoprotein-releasing system ATP-binding protein LolD from Ehrlichia chaffeensis (strain ATCC CRL-10679 / Arkansas).